Here is an 86-residue protein sequence, read N- to C-terminus: Tryptophan-containing weak neurotoxin (86 aa).

An N-terminal signal peptide occupies residues 1–21 (MKTLLLTLVVVTIVCLDLGYT). 5 cysteine pairs are disulfide-bonded: Cys-24–Cys-45, Cys-27–Cys-32, Cys-38–Cys-63, Cys-67–Cys-78, and Cys-79–Cys-84.

This sequence belongs to the three-finger toxin family. Ancestral subfamily. Orphan group II sub-subfamily. In terms of assembly, monomer in solution. Post-translationally, the disulfide bond Cys-27-Cys-32 is probably not needed for efficient interaction of the toxin with the target receptor (Torpedo muscle or alpha-7/CHRNA7 nAChR). In terms of tissue distribution, expressed by the venom gland.

It is found in the secreted. Neurotoxin that irreversibly inhibits nicotinic acetylcholine receptors (nAChR) and allosterically interacts with muscarinic acetylcholine receptors (mAChR). The loop II is involved in the interaction of this toxin with nAChR and mAChR. On nAChR, it acts as a competitive antagonist (muscle-type and alpha-7/CHRNA7) with IC(50) values in the micromolar range. On mAChR, in presence of ACh, it partially inhibits the effect of acetylcholine (ACh) (allosteric antagonist), whereas in the absence of ACh, it activates the receptor (allosteric agonist). It also shows a very weak inhibition of GABA(A) receptor composed of alpha-1-beta-3-gamma-2 (GABRA1 and GABRB3 and GABRG2) subunits (10 uM inhibit 31% current). In vivo, is nonlethal to mice at concentrations up to 20 mg/kg, but exerts a myorelaxant effect, induces a dose-dependent decrease in blood pressure and an increase in heart rate in mice and rats. This Naja kaouthia (Monocled cobra) protein is Tryptophan-containing weak neurotoxin.